The primary structure comprises 32 residues: Peptide II.10.10 (32 aa).

Disulfide bonds link Cys-5–Cys-24, Cys-10–Cys-29, and Cys-14–Cys-31.

The protein belongs to the short scorpion toxin superfamily. Potassium channel inhibitor family. Alpha-KTx 10 subfamily. As to expression, expressed by the venom gland.

It localises to the secreted. The polypeptide is Peptide II.10.10 (Centruroides tecomanus (Scorpion)).